The following is a 190-amino-acid chain: Xanthine phosphoribosyltransferase (190 aa).

Xanthine-binding residues include L20 and N27. Residue 129-133 (ANGAA) coordinates 5-phospho-alpha-D-ribose 1-diphosphate. Xanthine is bound at residue K157.

The protein belongs to the purine/pyrimidine phosphoribosyltransferase family. Xpt subfamily. As to quaternary structure, homodimer.

It localises to the cytoplasm. The catalysed reaction is XMP + diphosphate = xanthine + 5-phospho-alpha-D-ribose 1-diphosphate. The protein operates within purine metabolism; XMP biosynthesis via salvage pathway; XMP from xanthine: step 1/1. Functionally, converts the preformed base xanthine, a product of nucleic acid breakdown, to xanthosine 5'-monophosphate (XMP), so it can be reused for RNA or DNA synthesis. This chain is Xanthine phosphoribosyltransferase, found in Laribacter hongkongensis (strain HLHK9).